Reading from the N-terminus, the 571-residue chain is Proline--tRNA ligase (571 aa).

Belongs to the class-II aminoacyl-tRNA synthetase family. ProS type 1 subfamily. As to quaternary structure, homodimer.

It is found in the cytoplasm. It catalyses the reaction tRNA(Pro) + L-proline + ATP = L-prolyl-tRNA(Pro) + AMP + diphosphate. Catalyzes the attachment of proline to tRNA(Pro) in a two-step reaction: proline is first activated by ATP to form Pro-AMP and then transferred to the acceptor end of tRNA(Pro). As ProRS can inadvertently accommodate and process non-cognate amino acids such as alanine and cysteine, to avoid such errors it has two additional distinct editing activities against alanine. One activity is designated as 'pretransfer' editing and involves the tRNA(Pro)-independent hydrolysis of activated Ala-AMP. The other activity is designated 'posttransfer' editing and involves deacylation of mischarged Ala-tRNA(Pro). The misacylated Cys-tRNA(Pro) is not edited by ProRS. The polypeptide is Proline--tRNA ligase (Ligilactobacillus salivarius (strain UCC118) (Lactobacillus salivarius)).